The primary structure comprises 510 residues: Histone deacetylase 3 (510 aa).

Residues 24-338 form a histone deacetylase region; it reads RRVCYFYDPE…WCYETGVALG (315 aa). Residue His158 is the Proton donor/acceptor of the active site. Zn(2+) is bound by residues Asp193, His195, and Asp281. The tract at residues 394–510 is disordered; it reads PSVQFQERIP…ARNEPGSSPK (117 aa). 2 stretches are compositionally biased toward basic and acidic residues: residues 418 to 434 and 448 to 472; these read DERH…DHKP and VKRE…HKGP. The span at 485–503 shows a compositional bias: low complexity; sequence APTADANAVAVNAPGNARN.

Belongs to the histone deacetylase family. HD Type 1 subfamily. The cofactor is Zn(2+). Expressed in roots.

It is found in the nucleus. It carries out the reaction N(6)-acetyl-L-lysyl-[histone] + H2O = L-lysyl-[histone] + acetate. In terms of biological role, responsible for the deacetylation of lysine residues on the N-terminal part of the core histones (H2A, H2B, H3 and H4). Histone deacetylation gives a tag for epigenetic repression and plays an important role in transcriptional regulation, cell cycle progression and developmental events. Histone deacetylases act via the formation of large multiprotein complexes. This chain is Histone deacetylase 3, found in Oryza sativa subsp. japonica (Rice).